The following is a 267-amino-acid chain: Phosphate import ATP-binding protein PstB (267 aa).

Residues 21 to 262 (VAARNLDFYY…PSKQQTEDYI (242 aa)) form the ABC transporter domain. 53–60 (GPSGCGKS) contacts ATP.

It belongs to the ABC transporter superfamily. Phosphate importer (TC 3.A.1.7) family. In terms of assembly, the complex is composed of two ATP-binding proteins (PstB), two transmembrane proteins (PstC and PstA) and a solute-binding protein (PstS).

The protein localises to the cell inner membrane. It catalyses the reaction phosphate(out) + ATP + H2O = ADP + 2 phosphate(in) + H(+). In terms of biological role, part of the ABC transporter complex PstSACB involved in phosphate import. Responsible for energy coupling to the transport system. This chain is Phosphate import ATP-binding protein PstB, found in Xanthomonas oryzae pv. oryzae (strain MAFF 311018).